A 519-amino-acid chain; its full sequence is Importin subunit alpha-5 (519 aa).

In terms of domain architecture, IBB spans 1–58 (MSLRPSTKTEIRRIRYKVSVDAEEGRRRREDFLVEIRKSKRNENLMKKRRVKVLPPDY). ARM repeat units follow at residues 103 to 143 (SPPT…NIAS), 146 to 185 (SEHT…NVAG), 188 to 228 (IQCR…NFFR), 230 to 269 (KPSP…NLSD), 272 to 311 (NENI…NIVS), 314 to 354 (SQQT…NITA), 357 to 396 (EEQI…NASV), and 400 to 439 (PNQI…MILI).

Belongs to the importin alpha family. In terms of assembly, forms a complex with importin subunit beta-1.

The protein resides in the nucleus envelope. Its function is as follows. Binds to conventional NLS motifs and mediates nuclear protein import across the nuclear envelope. The chain is Importin subunit alpha-5 from Arabidopsis thaliana (Mouse-ear cress).